The chain runs to 733 residues: Forkhead box protein K1 (733 aa).

The residue at position 2 (A2) is an N-acetylalanine. An interaction with SIN3A and SIN3B region spans residues 2-40 (AEVGEDSGARALLALRSAPCSPVLCAAAAAAAFPAAAPP). Positions 36–79 (AAAPPPAPAQPQPPPGPPPPPPPPLPPGAIAGAGSSGGSSGVSG) are disordered. Positions 37 to 62 (AAPPPAPAQPQPPPGPPPPPPPPLPP) are enriched in pro residues. Residues 95-420 (AASVRQSPGP…PLSSRSAPAS (326 aa)) are required for interaction with FOXO4 and MEF2C. At S101 the chain carries Phosphoserine. The 53-residue stretch at 123-175 (VTIGRNSSQGSVDLSMGLSSFISRRHLQLSFQEPHFYLRCLGKNGVFVDGAFQ) folds into the FHA domain. An omega-N-methylarginine mark is found at R161 and R191. Phosphoserine is present on residues S213, S223, S239, and S243. Phosphothreonine occurs at positions 245 and 247. S253, S257, S295, and S299 each carry phosphoserine. Disordered stretches follow at residues 287–306 (ASEQ…ESKP) and 413–436 (SSRS…GLQT). The segment at residues 305-400 (KPPFSYAQLI…EQAFRKRRQR (96 aa)) is a DNA-binding region (fork-head). S416 and S420 each carry phosphoserine. At T422 the chain carries Phosphothreonine. S428 carries the phosphoserine modification. Phosphothreonine is present on T436. Residues S441, S445, and S459 each carry the phosphoserine modification. Residues 676–697 (VAATATTTPATATTASASASST) are compositionally biased toward low complexity. The interval 676 to 733 (VAATATTTPATATTASASASSTGEPEVKRSRVEEPSGAVTTPAGVIAAAGPQGPGTGE) is disordered. A compositionally biased stretch (basic and acidic residues) spans 700-709 (PEVKRSRVEE).

In terms of assembly, interacts with SIN3A and SIN3B (via PAH2) to form a complex which represses transcription. Component of SIN3A-, but not SIN3B-, containing multiprotein complexes. Interacts with FOXO4 and MEF2C; both interactions inhibit FOXO4 and MEF2C transactivation activity. Interacts (when phosphorylated) with YWHAE/14-3-3-epsilon; promotes sequestration in the cytoplasm and leads to impaired ability to bind DNA. Interacts with FHL2. Interacts with SRF. Interacts with DVL2 and DVL3; the interaction induces DVL2 nuclear translocation. Interacts with BAP1 (when phosphorylated). Accessory component of the polycomb repressive deubiquitinase (PR-DUB) complex, at least composed of BAP1, one of ASXL1, ASXL2 or (probably) ASXL3 and one of MBD5 or MBD6. The PR-DUB core associates with a number of accessory proteins, including FOXK1, FOXK2, KDM1B, HCFC1 and OGT. In terms of processing, phosphorylation by GSK3 (GSK3A or GSK3B) promotes interaction with YWHAE/14-3-3-epsilon and retention in the cytoplasm. In response to mTORC1 signaling, phosphorylation by GSK3 is prevented, leading to translocation to the nucleus. As to expression, expressed both developing and adult tissues. In adults, significant expression is seen in tumors of the brain, colon and lymph node.

Its subcellular location is the nucleus. The protein localises to the cytoplasm. In terms of biological role, transcriptional regulator involved in different processes such as glucose metabolism, aerobic glycolysis, muscle cell differentiation and autophagy. Recognizes and binds the forkhead DNA sequence motif (5'-GTAAACA-3') and can both act as a transcription activator or repressor, depending on the context. Together with FOXK2, acts as a key regulator of metabolic reprogramming towards aerobic glycolysis, a process in which glucose is converted to lactate in the presence of oxygen. Acts by promoting expression of enzymes for glycolysis (such as hexokinase-2 (HK2), phosphofructokinase, pyruvate kinase (PKLR) and lactate dehydrogenase), while suppressing further oxidation of pyruvate in the mitochondria by up-regulating pyruvate dehydrogenase kinases PDK1 and PDK4. Probably plays a role in gluconeogenesis during overnight fasting, when lactate from white adipose tissue and muscle is the main substrate. Involved in mTORC1-mediated metabolic reprogramming: in response to mTORC1 signaling, translocates into the nucleus and regulates the expression of genes associated with glycolysis and downstream anabolic pathways, such as HIF1A, thereby regulating glucose metabolism. Together with FOXK2, acts as a negative regulator of autophagy in skeletal muscle: in response to starvation, enters the nucleus, binds the promoters of autophagy genes and represses their expression, preventing proteolysis of skeletal muscle proteins. Acts as a transcriptional regulator of the myogenic progenitor cell population in skeletal muscle. Binds to the upstream enhancer region (CCAC box) of myoglobin (MB) gene, regulating the myogenic progenitor cell population. Promotes muscle progenitor cell proliferation by repressing the transcriptional activity of FOXO4, thereby inhibiting myogenic differentiation. Involved in remodeling processes of adult muscles that occur in response to physiological stimuli. Required to correct temporal orchestration of molecular and cellular events necessary for muscle repair. Represses myogenic differentiation by inhibiting MEFC activity. Positively regulates Wnt/beta-catenin signaling by translocating DVL into the nucleus. Reduces virus replication, probably by binding the interferon stimulated response element (ISRE) to promote antiviral gene expression. Accessory component of the polycomb repressive deubiquitinase (PR-DUB) complex; recruits the PR-DUB complex to specific FOXK1-bound genes. This is Forkhead box protein K1 from Homo sapiens (Human).